Reading from the N-terminus, the 556-residue chain is Hydroxylamine reductase (556 aa).

[4Fe-4S] cluster is bound by residues cysteine 4, cysteine 7, cysteine 19, and cysteine 26. Positions 252, 276, 320, 407, 435, 460, 494, and 496 each coordinate hybrid [4Fe-2O-2S] cluster. Residue cysteine 407 is modified to Cysteine persulfide.

It belongs to the HCP family. Requires [4Fe-4S] cluster as cofactor. Hybrid [4Fe-2O-2S] cluster serves as cofactor.

Its subcellular location is the cytoplasm. It carries out the reaction A + NH4(+) + H2O = hydroxylamine + AH2 + H(+). Functionally, catalyzes the reduction of hydroxylamine to form NH(3) and H(2)O. The polypeptide is Hydroxylamine reductase (Acidithiobacillus ferridurans).